The primary structure comprises 398 residues: 1-deoxy-D-xylulose 5-phosphate reductoisomerase (398 aa).

The NADPH site is built by threonine 10, glycine 11, serine 12, isoleucine 13, glycine 36, lysine 37, asparagine 38, and asparagine 124. Residue lysine 125 coordinates 1-deoxy-D-xylulose 5-phosphate. NADPH is bound at residue glutamate 126. Position 150 (aspartate 150) interacts with Mn(2+). 4 residues coordinate 1-deoxy-D-xylulose 5-phosphate: serine 151, glutamate 152, serine 186, and histidine 209. Glutamate 152 contributes to the Mn(2+) binding site. Residue glycine 215 coordinates NADPH. Serine 222, asparagine 227, lysine 228, and glutamate 231 together coordinate 1-deoxy-D-xylulose 5-phosphate. Glutamate 231 is a binding site for Mn(2+).

It belongs to the DXR family. As to quaternary structure, homodimer. The cofactor is Mg(2+). It depends on Mn(2+) as a cofactor.

It carries out the reaction 2-C-methyl-D-erythritol 4-phosphate + NADP(+) = 1-deoxy-D-xylulose 5-phosphate + NADPH + H(+). It functions in the pathway isoprenoid biosynthesis; isopentenyl diphosphate biosynthesis via DXP pathway; isopentenyl diphosphate from 1-deoxy-D-xylulose 5-phosphate: step 1/6. In terms of biological role, catalyzes the NADPH-dependent rearrangement and reduction of 1-deoxy-D-xylulose-5-phosphate (DXP) to 2-C-methyl-D-erythritol 4-phosphate (MEP). This is 1-deoxy-D-xylulose 5-phosphate reductoisomerase from Escherichia coli O157:H7.